The following is a 108-amino-acid chain: MVMAKNLTKFYVVFLVVLMMVVSLLLAIEGRPVKDSSRSLTQMRDSSMFNGSVIMSSFKPVESSVKDLSWLATVKQSGPSPGVGHHRAKGYKMFGRANDSGPSPGVGH.

A signal peptide spans 1 to 27 (MVMAKNLTKFYVVFLVVLMMVVSLLLA). Residues 28–92 (IEGRPVKDSS…VGHHRAKGYK (65 aa)) constitute a propeptide that is removed on maturation. N-linked (GlcNAc...) asparagine glycosylation is found at Asn50 and Asn98. The disordered stretch occupies residues 76–108 (QSGPSPGVGHHRAKGYKMFGRANDSGPSPGVGH). Pro102 and Pro104 each carry hydroxyproline.

This sequence belongs to the C-terminally encoded plant signaling peptide (CEP) family. As to quaternary structure, interacts with CEP receptors (e.g. CEPR1 and CEPR2). Post-translationally, the mature small signaling peptide is generated by proteolytic processing of the longer precursor.

It localises to the secreted. Its subcellular location is the extracellular space. The protein localises to the apoplast. Functionally, extracellular signaling peptide that may regulate primary root growth rate and systemic nitrogen (N)-demand signaling. In Arabidopsis thaliana (Mouse-ear cress), this protein is Precursor of CEP16.